A 251-amino-acid chain; its full sequence is uncharacterized protein (251 aa).

The protein resides in the mitochondrion. This is an uncharacterized protein from Arabidopsis thaliana (Mouse-ear cress).